Here is a 1404-residue protein sequence, read N- to C-terminus: DNA-directed RNA polymerase subunit beta' (1404 aa).

Zn(2+) is bound by residues Cys60, Cys62, Cys75, and Cys78. Residues Asp449, Asp451, and Asp453 each coordinate Mg(2+). The Zn(2+) site is built by Cys778, Cys852, Cys859, and Cys862. Residues 1381 to 1404 (DRPLEEEEEEEIPQSIADDSDGDE) form a disordered region. Acidic residues predominate over residues 1384–1404 (LEEEEEEEIPQSIADDSDGDE).

Belongs to the RNA polymerase beta' chain family. The RNAP catalytic core consists of 2 alpha, 1 beta, 1 beta' and 1 omega subunit. When a sigma factor is associated with the core the holoenzyme is formed, which can initiate transcription. The cofactor is Mg(2+). Zn(2+) serves as cofactor.

The catalysed reaction is RNA(n) + a ribonucleoside 5'-triphosphate = RNA(n+1) + diphosphate. Functionally, DNA-dependent RNA polymerase catalyzes the transcription of DNA into RNA using the four ribonucleoside triphosphates as substrates. In Leptospira borgpetersenii serovar Hardjo-bovis (strain L550), this protein is DNA-directed RNA polymerase subunit beta'.